Here is a 297-residue protein sequence, read N- to C-terminus: Nucleotide-binding protein Bxeno_A0336 (297 aa).

8-15 (GISGSGKS) is an ATP binding site. 57–60 (DARS) is a binding site for GTP.

It belongs to the RapZ-like family.

In terms of biological role, displays ATPase and GTPase activities. This chain is Nucleotide-binding protein Bxeno_A0336, found in Paraburkholderia xenovorans (strain LB400).